The sequence spans 586 residues: Dual specificity tyrosine-phosphorylation-regulated kinase 3 (586 aa).

Residues 1–13 (MGGAARERGRKDA) are compositionally biased toward basic and acidic residues. Positions 1–187 (MGGAARERGR…QGVIGGPNNG (187 aa)) are disordered. Residues 208-521 (YEVLKIIGKG…PAQALRHPWI (314 aa)) form the Protein kinase domain. Residues 214 to 222 (IGKGSFGQV), Lys237, and 287 to 290 (FELL) each bind ATP. Catalysis depends on Asp334, which acts as the Proton acceptor. Residue Tyr368 is modified to Phosphotyrosine. A Nuclear localization signal motif is present at residues 467–480 (RSRRGKKRGPPGSK).

It belongs to the protein kinase superfamily. CMGC Ser/Thr protein kinase family. MNB/DYRK subfamily. As to quaternary structure, interacts with SIRT1. It depends on Mg(2+) as a cofactor. Protein kinase activity is activated following autophosphorylation at Tyr-368. Post-translationally, ubiquitinated at anaphase by the anaphase-promoting complex (APC/C), leading to its degradation by the proteasome. In terms of tissue distribution, expressed predominantly in testis. Expressed in late pachytene spermatocytes.

It localises to the nucleus. The protein resides in the cytoplasm. Its subcellular location is the nucleus speckle. It is found in the cytoplasmic granule. The protein localises to the cytoskeleton. It localises to the microtubule organizing center. The protein resides in the centrosome. The catalysed reaction is L-seryl-[protein] + ATP = O-phospho-L-seryl-[protein] + ADP + H(+). It catalyses the reaction L-threonyl-[protein] + ATP = O-phospho-L-threonyl-[protein] + ADP + H(+). The enzyme catalyses L-tyrosyl-[protein] + ATP = O-phospho-L-tyrosyl-[protein] + ADP + H(+). With respect to regulation, protein kinase activity is activated following autophosphorylation at Tyr-368. Its function is as follows. Dual-specificity protein kinase that promotes disassembly of several types of membraneless organelles during mitosis, such as stress granules, nuclear speckles and pericentriolar material. Dual-specificity tyrosine-regulated kinases (DYRKs) autophosphorylate a critical tyrosine residue in their activation loop and phosphorylate their substrate on serine and threonine residues. Acts as a central dissolvase of membraneless organelles during the G2-to-M transition, after the nuclear-envelope breakdown: acts by mediating phosphorylation of multiple serine and threonine residues in unstructured domains of proteins, such as SRRM1 and PCM1. Does not mediate disassembly of all membraneless organelles: disassembly of P-body and nucleolus is not regulated by DYRK3. Dissolution of membraneless organelles at the onset of mitosis is also required to release mitotic regulators, such as ZNF207, from liquid-unmixed organelles where they are sequestered and keep them dissolved during mitosis. Regulates mTORC1 by mediating the dissolution of stress granules: during stressful conditions, DYRK3 partitions from the cytosol to the stress granule, together with mTORC1 components, which prevents mTORC1 signaling. When stress signals are gone, the kinase activity of DYRK3 is required for the dissolution of stress granule and mTORC1 relocation to the cytosol: acts by mediating the phosphorylation of the mTORC1 inhibitor AKT1S1, allowing full reactivation of mTORC1 signaling. Also acts as a negative regulator of EPO-dependent erythropoiesis: may place an upper limit on red cell production during stress erythropoiesis. Inhibits cell death due to cytokine withdrawal in hematopoietic progenitor cells. Promotes cell survival upon genotoxic stress through phosphorylation of SIRT1: this in turn inhibits p53/TP53 activity and apoptosis. The chain is Dual specificity tyrosine-phosphorylation-regulated kinase 3 from Rattus norvegicus (Rat).